We begin with the raw amino-acid sequence, 501 residues long: Lysine--tRNA ligase (501 aa).

E410 and E417 together coordinate Mg(2+).

It belongs to the class-II aminoacyl-tRNA synthetase family. Homodimer. It depends on Mg(2+) as a cofactor.

The protein resides in the cytoplasm. It catalyses the reaction tRNA(Lys) + L-lysine + ATP = L-lysyl-tRNA(Lys) + AMP + diphosphate. The polypeptide is Lysine--tRNA ligase (Shewanella halifaxensis (strain HAW-EB4)).